A 510-amino-acid chain; its full sequence is 2,3-bisphosphoglycerate-independent phosphoglycerate mutase (510 aa).

Mn(2+) contacts are provided by D13 and S63. S63 functions as the Phosphoserine intermediate in the catalytic mechanism. Substrate is bound by residues H124, 154 to 155, R186, R192, 262 to 265, and K334; these read RD and RADR. Mn(2+)-binding residues include D401, H405, D442, H443, and H461.

The protein belongs to the BPG-independent phosphoglycerate mutase family. As to quaternary structure, monomer. Requires Mn(2+) as cofactor.

The enzyme catalyses (2R)-2-phosphoglycerate = (2R)-3-phosphoglycerate. It functions in the pathway carbohydrate degradation; glycolysis; pyruvate from D-glyceraldehyde 3-phosphate: step 3/5. In terms of biological role, catalyzes the interconversion of 2-phosphoglycerate and 3-phosphoglycerate. The sequence is that of 2,3-bisphosphoglycerate-independent phosphoglycerate mutase from Vibrio cholerae serotype O1 (strain ATCC 39541 / Classical Ogawa 395 / O395).